The primary structure comprises 279 residues: DegV domain-containing protein M6_Spy1246 (279 aa).

Positions Ile4–Tyr278 constitute a DegV domain. Residues Thr62 and Ser95 each coordinate hexadecanoate.

Its function is as follows. May bind long-chain fatty acids, such as palmitate, and may play a role in lipid transport or fatty acid metabolism. This chain is DegV domain-containing protein M6_Spy1246, found in Streptococcus pyogenes serotype M6 (strain ATCC BAA-946 / MGAS10394).